Reading from the N-terminus, the 211-residue chain is ATP phosphoribosyltransferase (211 aa).

This sequence belongs to the ATP phosphoribosyltransferase family. Short subfamily. Heteromultimer composed of HisG and HisZ subunits.

The protein resides in the cytoplasm. The enzyme catalyses 1-(5-phospho-beta-D-ribosyl)-ATP + diphosphate = 5-phospho-alpha-D-ribose 1-diphosphate + ATP. The protein operates within amino-acid biosynthesis; L-histidine biosynthesis; L-histidine from 5-phospho-alpha-D-ribose 1-diphosphate: step 1/9. Its function is as follows. Catalyzes the condensation of ATP and 5-phosphoribose 1-diphosphate to form N'-(5'-phosphoribosyl)-ATP (PR-ATP). Has a crucial role in the pathway because the rate of histidine biosynthesis seems to be controlled primarily by regulation of HisG enzymatic activity. The protein is ATP phosphoribosyltransferase of Ectopseudomonas mendocina (strain ymp) (Pseudomonas mendocina).